A 256-amino-acid chain; its full sequence is DNA repair protein RecO (256 aa).

The protein belongs to the RecO family.

Its function is as follows. Involved in DNA repair and RecF pathway recombination. In Streptococcus pneumoniae (strain Hungary19A-6), this protein is DNA repair protein RecO.